Consider the following 373-residue polypeptide: Dual-specificity RNA methyltransferase RlmN (373 aa).

Residue Glu94 is the Proton acceptor of the active site. Positions 100 to 339 (EDDRATLCVS…VIVRKTRGDD (240 aa)) constitute a Radical SAM core domain. Residues Cys107 and Cys344 are joined by a disulfide bond. Positions 114, 118, and 121 each coordinate [4Fe-4S] cluster. S-adenosyl-L-methionine-binding positions include 168–169 (GE), Ser200, 222–224 (SIH), and Asn301. The active-site S-methylcysteine intermediate is Cys344.

The protein belongs to the radical SAM superfamily. RlmN family. The cofactor is [4Fe-4S] cluster.

It localises to the cytoplasm. The enzyme catalyses adenosine(2503) in 23S rRNA + 2 reduced [2Fe-2S]-[ferredoxin] + 2 S-adenosyl-L-methionine = 2-methyladenosine(2503) in 23S rRNA + 5'-deoxyadenosine + L-methionine + 2 oxidized [2Fe-2S]-[ferredoxin] + S-adenosyl-L-homocysteine. It carries out the reaction adenosine(37) in tRNA + 2 reduced [2Fe-2S]-[ferredoxin] + 2 S-adenosyl-L-methionine = 2-methyladenosine(37) in tRNA + 5'-deoxyadenosine + L-methionine + 2 oxidized [2Fe-2S]-[ferredoxin] + S-adenosyl-L-homocysteine. Its function is as follows. Specifically methylates position 2 of adenine 2503 in 23S rRNA and position 2 of adenine 37 in tRNAs. m2A2503 modification seems to play a crucial role in the proofreading step occurring at the peptidyl transferase center and thus would serve to optimize ribosomal fidelity. This Shewanella putrefaciens (strain CN-32 / ATCC BAA-453) protein is Dual-specificity RNA methyltransferase RlmN.